The sequence spans 243 residues: MRYKAIVEYVGTGFSGWQKQMSAPSVQEELESVLSFLLKEKIAVNVAGRTDAGVHALGQVFHFDARESTLQPFQIVNAVNYHLKEKLIVLLKIEIVDETFDARFSAIRRHYQYKITNRKTPLAVFKNRSWHVPQTLNLDLIREQAQYLVGKHDFQSFRSSKCGASNAIRTLDRLEVEKNGEEMIFHASAKSFLHHQVRIMVGTLVAIASGKLMSVTEILSKKNRRYAGPTAPPCGLYLLKVDY.

Aspartate 51 acts as the Nucleophile in catalysis. Tyrosine 111 lines the substrate pocket.

It belongs to the tRNA pseudouridine synthase TruA family. As to quaternary structure, homodimer.

It carries out the reaction uridine(38/39/40) in tRNA = pseudouridine(38/39/40) in tRNA. Formation of pseudouridine at positions 38, 39 and 40 in the anticodon stem and loop of transfer RNAs. The chain is tRNA pseudouridine synthase A from Neorickettsia sennetsu (strain ATCC VR-367 / Miyayama) (Ehrlichia sennetsu).